The sequence spans 279 residues: Tryptophan synthase alpha chain (279 aa).

Active-site proton acceptor residues include glutamate 50 and aspartate 61.

The protein belongs to the TrpA family. Tetramer of two alpha and two beta chains.

It catalyses the reaction (1S,2R)-1-C-(indol-3-yl)glycerol 3-phosphate + L-serine = D-glyceraldehyde 3-phosphate + L-tryptophan + H2O. It participates in amino-acid biosynthesis; L-tryptophan biosynthesis; L-tryptophan from chorismate: step 5/5. Its function is as follows. The alpha subunit is responsible for the aldol cleavage of indoleglycerol phosphate to indole and glyceraldehyde 3-phosphate. This is Tryptophan synthase alpha chain from Brucella anthropi (strain ATCC 49188 / DSM 6882 / CCUG 24695 / JCM 21032 / LMG 3331 / NBRC 15819 / NCTC 12168 / Alc 37) (Ochrobactrum anthropi).